The sequence spans 373 residues: MASPELSQFRRIVVKVGSALLVDSDKGEVRTSWLAALADDMAKLHKEGRDVLVVSSGSIALGRSRLKLPRGPLKLEESQAAAAVGQIALARIWSEVLGAHGIDAGQILVTLQDTEERRRYLNARSTIGKLLEWRAIPVINENDTVATTEIRYGDNDRLAARVATMASADLLVLLSDIDGLYDAPPKNNPNAKLIPVVDSISSEIEAVAGDAESELSRGGMRTKVEAAKIATTGGTHMLIASGKIEHPLQAIANGGRCTWFLTPANPITSRKRWIAGTLEPKGTLTIDAGAVTALRAGASLLPAGVIKVEGQFARGDAVIVRGPDTSEIGRGLIAYDADDAERIKGRSSPDVMTILGISGRAEMIHRDDLVVGG.

Position 15 (lysine 15) interacts with ATP. Residues serine 56, aspartate 143, and asparagine 155 each contribute to the substrate site. 175–176 contacts ATP; sequence SD. The 78-residue stretch at 281–358 folds into the PUA domain; the sequence is KGTLTIDAGA…PDVMTILGIS (78 aa).

Belongs to the glutamate 5-kinase family.

The protein localises to the cytoplasm. It catalyses the reaction L-glutamate + ATP = L-glutamyl 5-phosphate + ADP. It functions in the pathway amino-acid biosynthesis; L-proline biosynthesis; L-glutamate 5-semialdehyde from L-glutamate: step 1/2. In terms of biological role, catalyzes the transfer of a phosphate group to glutamate to form L-glutamate 5-phosphate. This is Glutamate 5-kinase from Bradyrhizobium diazoefficiens (strain JCM 10833 / BCRC 13528 / IAM 13628 / NBRC 14792 / USDA 110).